A 569-amino-acid chain; its full sequence is Proline--tRNA ligase (569 aa).

The protein belongs to the class-II aminoacyl-tRNA synthetase family. ProS type 1 subfamily. In terms of assembly, homodimer.

It localises to the cytoplasm. It catalyses the reaction tRNA(Pro) + L-proline + ATP = L-prolyl-tRNA(Pro) + AMP + diphosphate. Its function is as follows. Catalyzes the attachment of proline to tRNA(Pro) in a two-step reaction: proline is first activated by ATP to form Pro-AMP and then transferred to the acceptor end of tRNA(Pro). As ProRS can inadvertently accommodate and process non-cognate amino acids such as alanine and cysteine, to avoid such errors it has two additional distinct editing activities against alanine. One activity is designated as 'pretransfer' editing and involves the tRNA(Pro)-independent hydrolysis of activated Ala-AMP. The other activity is designated 'posttransfer' editing and involves deacylation of mischarged Ala-tRNA(Pro). The misacylated Cys-tRNA(Pro) is not edited by ProRS. The sequence is that of Proline--tRNA ligase from Dehalococcoides mccartyi (strain ATCC BAA-2100 / JCM 16839 / KCTC 5957 / BAV1).